The sequence spans 998 residues: Sensor histidine kinase AruS (998 aa).

Disordered regions lie at residues 27-82 (ERRP…HARA), 154-198 (RQAG…LPAG), and 224-245 (RQHP…RQPR). The span at 40–49 (GEAAVRRAGL) shows a compositional bias: low complexity. The segment covering 161–183 (HRLHRPRTTHRHAVRRAPGRRRE) has biased composition (basic residues). 2 helical membrane passes run 264-284 (VLLF…FFEY) and 395-415 (ASLL…SWLF). Residues 417 to 473 (SLVTRHLWRMSEFAGHIAEGDLQQPLRLDKVDRERDEIDAVAAALEDMRQALRTDRR) form the HAMP domain. The Histidine kinase domain maps to 513 to 734 (TMSHEIRTPL…TFWFEIELAL (222 aa)). Histidine 516 carries the post-translational modification Phosphohistidine; by autocatalysis. Residues 751-869 (EVLLVEDVAL…ELRRALGEVG (119 aa)) form the Response regulatory domain. Aspartate 800 carries the 4-aspartylphosphate modification. Residues 894-987 (GRHKLAGLLG…RDGAEALRRA (94 aa)) enclose the HPt domain. At histidine 933 the chain carries Phosphohistidine.

In terms of processing, autophosphorylated. Activation may require a sequential transfer of a phosphate group from a His in the primary transmitter domain, to an Asp in the receiver domain and to a His in the secondary transmitter domain.

Its subcellular location is the cell membrane. It carries out the reaction ATP + protein L-histidine = ADP + protein N-phospho-L-histidine.. It participates in amino-acid degradation; L-arginine degradation [regulation]. Member of the two-component regulatory system AruS/AruR, which is involved in the regulation of the arginine transaminase (ATA) pathway in response to exogeneous L-arginine. Probably functions as a sensor kinase that phosphorylates AruR. The chain is Sensor histidine kinase AruS (aruS) from Pseudomonas aeruginosa (strain ATCC 15692 / DSM 22644 / CIP 104116 / JCM 14847 / LMG 12228 / 1C / PRS 101 / PAO1).